A 215-amino-acid chain; its full sequence is Thiamine-phosphate synthase 1 (215 aa).

4-amino-2-methyl-5-(diphosphooxymethyl)pyrimidine is bound by residues 35 to 39 and Asn67; that span reads QYRFE. Mg(2+) contacts are provided by Asp68 and Asp87. Residue Thr106 participates in 4-amino-2-methyl-5-(diphosphooxymethyl)pyrimidine binding. 2-[(2R,5Z)-2-carboxy-4-methylthiazol-5(2H)-ylidene]ethyl phosphate is bound at residue 132–134; sequence TST. A 4-amino-2-methyl-5-(diphosphooxymethyl)pyrimidine-binding site is contributed by Lys135. Residue Gly162 coordinates 2-[(2R,5Z)-2-carboxy-4-methylthiazol-5(2H)-ylidene]ethyl phosphate.

It belongs to the thiamine-phosphate synthase family. Mg(2+) serves as cofactor.

It catalyses the reaction 2-[(2R,5Z)-2-carboxy-4-methylthiazol-5(2H)-ylidene]ethyl phosphate + 4-amino-2-methyl-5-(diphosphooxymethyl)pyrimidine + 2 H(+) = thiamine phosphate + CO2 + diphosphate. The catalysed reaction is 2-(2-carboxy-4-methylthiazol-5-yl)ethyl phosphate + 4-amino-2-methyl-5-(diphosphooxymethyl)pyrimidine + 2 H(+) = thiamine phosphate + CO2 + diphosphate. It carries out the reaction 4-methyl-5-(2-phosphooxyethyl)-thiazole + 4-amino-2-methyl-5-(diphosphooxymethyl)pyrimidine + H(+) = thiamine phosphate + diphosphate. It participates in cofactor biosynthesis; thiamine diphosphate biosynthesis; thiamine phosphate from 4-amino-2-methyl-5-diphosphomethylpyrimidine and 4-methyl-5-(2-phosphoethyl)-thiazole: step 1/1. Condenses 4-methyl-5-(beta-hydroxyethyl)thiazole monophosphate (THZ-P) and 2-methyl-4-amino-5-hydroxymethyl pyrimidine pyrophosphate (HMP-PP) to form thiamine monophosphate (TMP). The sequence is that of Thiamine-phosphate synthase 1 from Aquifex aeolicus (strain VF5).